The primary structure comprises 333 residues: Uroporphyrinogen decarboxylase (333 aa).

Residues 21-25, Asp70, Tyr139, Ser194, and His309 contribute to the substrate site; that span reads RQVGR.

Belongs to the uroporphyrinogen decarboxylase family. As to quaternary structure, homodimer.

The protein resides in the cytoplasm. It catalyses the reaction uroporphyrinogen III + 4 H(+) = coproporphyrinogen III + 4 CO2. Its pathway is porphyrin-containing compound metabolism; protoporphyrin-IX biosynthesis; coproporphyrinogen-III from 5-aminolevulinate: step 4/4. Functionally, catalyzes the decarboxylation of four acetate groups of uroporphyrinogen-III to yield coproporphyrinogen-III. This chain is Uroporphyrinogen decarboxylase, found in Chlamydia caviae (strain ATCC VR-813 / DSM 19441 / 03DC25 / GPIC) (Chlamydophila caviae).